The following is a 444-amino-acid chain: Tubulin beta chain (444 aa).

Positions Met1–Ile4 match the MREI motif motif. Residue Gln11 coordinates GTP. Position 40 is a phosphoserine (Ser40). Thr55 bears the Phosphothreonine mark. Lys58 bears the N6-acetyllysine; alternate mark. Lys58 is subject to N6-succinyllysine; alternate. A Glycyl lysine isopeptide (Lys-Gly) (interchain with G-Cter in ubiquitin); alternate cross-link involves residue Lys58. GTP is bound by residues Glu69, Ser138, Gly142, Thr143, and Gly144. Glu69 contacts Mg(2+). Residue Ser172 is modified to Phosphoserine; by CDK1. GTP is bound by residues Asn204 and Asn226. Residues Thr285 and Thr290 each carry the phosphothreonine modification. The residue at position 318 (Arg318) is an Omega-N-methylarginine. A Glycyl lysine isopeptide (Lys-Gly) (interchain with G-Cter in ubiquitin) cross-link involves residue Lys324. Positions Gln423–Ala444 are disordered. Positions Thr429 to Ala444 are enriched in acidic residues. 5-glutamyl polyglutamate is present on residues Glu434, Glu438, Glu439, and Glu441. A 5-glutamyl glycine mark is found at Glu438, Glu439, Glu441, Glu442, and Glu443.

This sequence belongs to the tubulin family. As to quaternary structure, heterodimer of alpha and beta chains. A typical microtubule is a hollow water-filled tube with an outer diameter of 25 nm and an inner diameter of 15 nM. Alpha-beta heterodimers associate head-to-tail to form protofilaments running lengthwise along the microtubule wall with the beta-tubulin subunit facing the microtubule plus end conferring a structural polarity. Microtubules usually have 13 protofilaments but different protofilament numbers can be found in some organisms and specialized cells. Interacts with CIMAP3. Interacts with DIAPH1. Interacts with MX1. May interact with RNABP10. Interacts with CFAP157. Nascent tubulin polypeptide interacts (via beta-tubulin MREI motif) with TTC5/STRAP; this interaction results in tubulin mRNA-targeted degradation. The cofactor is Mg(2+). In terms of processing, some glutamate residues at the C-terminus are polyglycylated, resulting in polyglycine chains on the gamma-carboxyl group. Glycylation is mainly limited to tubulin incorporated into axonemes (cilia and flagella) whereas glutamylation is prevalent in neuronal cells, centrioles, axonemes, and the mitotic spindle. Both modifications can coexist on the same protein on adjacent residues, and lowering polyglycylation levels increases polyglutamylation, and reciprocally. Cilia and flagella glycylation is required for their stability and maintenance. Flagella glycylation controls sperm motility. Some glutamate residues at the C-terminus are polyglutamylated, resulting in polyglutamate chains on the gamma-carboxyl group. Polyglutamylation plays a key role in microtubule severing by spastin (SPAST). SPAST preferentially recognizes and acts on microtubules decorated with short polyglutamate tails: severing activity by SPAST increases as the number of glutamates per tubulin rises from one to eight, but decreases beyond this glutamylation threshold. Glutamylation is also involved in cilia motility. Post-translationally, phosphorylated on Ser-172 by CDK1 during the cell cycle, from metaphase to telophase, but not in interphase. This phosphorylation inhibits tubulin incorporation into microtubules.

The protein localises to the cytoplasm. The protein resides in the cytoskeleton. Tubulin is the major constituent of microtubules, a cylinder consisting of laterally associated linear protofilaments composed of alpha- and beta-tubulin heterodimers. Microtubules grow by the addition of GTP-tubulin dimers to the microtubule end, where a stabilizing cap forms. Below the cap, tubulin dimers are in GDP-bound state, owing to GTPase activity of alpha-tubulin. The polypeptide is Tubulin beta chain (TUBB) (Sus scrofa (Pig)).